Here is a 137-residue protein sequence, read N- to C-terminus: uncharacterized protein (137 aa).

It belongs to the ycf72 family.

The protein resides in the plastid. The protein localises to the chloroplast. This is an uncharacterized protein from Zea mays (Maize).